A 385-amino-acid polypeptide reads, in one-letter code: Odorant receptor 47a (385 aa).

The Cytoplasmic portion of the chain corresponds to 1–33 (MDSFLQVQKSTIALLGFDLFSENREMWKRPYRA). A helical transmembrane segment spans residues 34-54 (MNVFSIAAIFPFILAAVLHNW). Topologically, residues 55–62 (KNVLLLAD) are extracellular. Residues 63 to 83 (AMVALLITILGLFKFSMILYL) form a helical membrane-spanning segment. Topologically, residues 84–129 (RRDFKRLIDKFRLLMSNEAEQGEEYAEILNAANKQDQRMCTLFRTC) are cytoplasmic. Residues 130 to 150 (FLLAWALNSVLPLVRMGLSYW) form a helical membrane-spanning segment. Topologically, residues 151–175 (LAGHAEPELPFPCLFPWNIHIIRNY) are extracellular. A helical membrane pass occupies residues 176 to 196 (VLSFIWSAFASTGVVLPAVSL). Over 197-255 (DTIFCSFTSNLCAFFKIAQYKVVRFKGGSLKESQATLNKVFALYQTSLDMCNDLNQCYQ) the chain is Cytoplasmic. Residues 256-276 (PIICAQFFISSLQLCMLGYLF) form a helical membrane-spanning segment. The Extracellular portion of the chain corresponds to 277-284 (SITFAQTE). A helical membrane pass occupies residues 285–305 (GVYYASFIATIIIQAYIYCYC). The Cytoplasmic portion of the chain corresponds to 306–357 (GENLKTESASFEWAIYDSPWHESLGAGGASTSICRSLLISMMRAHRGFRITG). The chain crosses the membrane as a helical span at residues 358–378 (YFFEANMEAFSSIVRTAMSYI). Residues 379-385 (TMLRSFS) are Extracellular-facing.

It belongs to the insect chemoreceptor superfamily. Heteromeric odorant receptor channel (TC 1.A.69) family. Or1a subfamily. Interacts with Orco. Complexes exist early in the endomembrane system in olfactory sensory neurons (OSNs), coupling these complexes to the conserved ciliary trafficking pathway. In terms of tissue distribution, expressed with Orco in 40 olfactory receptor neurons in a broad area across the antenna, including both anterior and posterior faces. This expression pattern matches the distribution of the small sensilla basiconica. Expression in the antenna is observed late in antennal development at 93 hours APF.

The protein localises to the cell membrane. Functionally, odorant receptor which mediates acceptance or avoidance behavior, depending on its substrates. The odorant receptor repertoire encodes a large collection of odor stimuli that vary widely in identity, intensity, and duration. Complexes with Orco to form odorant-sensing units, providing sensitive and prolonged odorant signaling and calcium permeability. They are necessary and sufficient to promote functional reconstitution of odor-evoked signaling in sensory neurons that normally respond only to carbon dioxide. Involved in the behavioral responses to esters. Involved in the behavioral responses to pentyl acetate. The chain is Odorant receptor 47a (Or47a) from Drosophila melanogaster (Fruit fly).